The primary structure comprises 147 residues: Protein-export protein SecB 2 (147 aa).

This sequence belongs to the SecB family. As to quaternary structure, homotetramer, a dimer of dimers. One homotetramer interacts with 1 SecA dimer.

The protein localises to the cytoplasm. Functionally, one of the proteins required for the normal export of preproteins out of the cell cytoplasm. It is a molecular chaperone that binds to a subset of precursor proteins, maintaining them in a translocation-competent state. It also specifically binds to its receptor SecA. The protein is Protein-export protein SecB 2 of Francisella tularensis subsp. novicida (strain U112).